Here is a 236-residue protein sequence, read N- to C-terminus: Syntaxin-8 (236 aa).

The Cytoplasmic portion of the chain corresponds to 1–215 (MAPDPWFSTY…LVDRKSASCG (215 aa)). A coiled-coil region spans residues 42 to 65 (LTIRTLLKNLKVKIDLLKDLLLRA). Residues serine 102 and serine 160 each carry the phosphoserine modification. A t-SNARE coiled-coil homology domain is found at 145–207 (QKIIQEQDAG…RTEARRVTLV (63 aa)). A helical; Anchor for type IV membrane protein membrane pass occupies residues 216 to 232 (MIMVILLLLVAIVVVAV). Topologically, residues 233–236 (WPTN) are vesicular.

This sequence belongs to the syntaxin family. Part of the SNARE core complex containing STX7, VAMP8 and VTI1B. Interacts with VAMP8. Forms a SNARE complex with STX7, VTI1B and VAMP8 which functions in the homotypic fusion of late endosomes. Component of the SNARE complex composed of STX7, STX8, VAMP7 and VTI1B that is required for heterotypic fusion of late endosomes with lysosomes. Interacts with HECTD3. Interacts with TPC1. Post-translationally, ubiquitinated by HECTD3. In terms of tissue distribution, widely expressed in all tissues examined.

It is found in the membrane. Functionally, vesicle trafficking protein that functions in the early secretory pathway, possibly by mediating retrograde transport from cis-Golgi membranes to the ER. In Rattus norvegicus (Rat), this protein is Syntaxin-8 (Stx8).